We begin with the raw amino-acid sequence, 343 residues long: MKALAKLRPEEGIWMVDSPTPELGHNDIMIKIRKSAICGTDVHIYNWDEWSQKTIPVPMVVGHEYVGEIVAIGQEVNGFHIGDRVSGEGHITCGYCRNCRAGRRHLCRNAIGVGVNRPGSFAEYLVIPAYNAFRIPDNISDELAAIFDPFGNAVHTALSFDLVGEDVLIAGAGPIGMMAAAVCRHVGARNVVITDVNAYRLDLARKMGATRAVNVAEERLADVMIELGMTEGFDIGLEMSGAPSAFRAMLKAMNHGGRIAMLGIPHEPMSIDWGEVIFKGLFIKGIYGREMFETWYKMSALIQSGLDLSPIITHRFHIDEFQKGFDAMRSGQSGKVILNWDER.

C38 serves as a coordination point for Zn(2+). Residues T40 and H43 each act as charge relay system in the active site. Zn(2+)-binding residues include H63, E64, C93, C96, C99, and C107. Residues I175, D195, R200, 262-264 (LGI), and 286-287 (IY) each bind NAD(+).

Belongs to the zinc-containing alcohol dehydrogenase family. In terms of assembly, homotetramer. The cofactor is Zn(2+).

It localises to the cytoplasm. It carries out the reaction L-threonine + NAD(+) = (2S)-2-amino-3-oxobutanoate + NADH + H(+). Its pathway is amino-acid degradation; L-threonine degradation via oxydo-reductase pathway; glycine from L-threonine: step 1/2. Functionally, catalyzes the NAD(+)-dependent oxidation of L-threonine to 2-amino-3-ketobutyrate. The protein is L-threonine 3-dehydrogenase of Pectobacterium carotovorum subsp. carotovorum (strain PC1).